We begin with the raw amino-acid sequence, 592 residues long: MLRRALEEAIAQALKEMGVPARLKVARAPKDKPGDYGVPLFALAKELRKPPQAIAQELKDRLPLPEFVEEAIPVGGYLNFRLRTEALLREALRPKAPFPRRPGVVLVEHTSVNPNKELHVGHLRNIALGDAIARILAYAGREVLVLNYIDDTGRQAAETLFALRHYGLTWDGKEKYDHFAGRAYVRLHQDPEYERLQPAIEEVLHALERGELREEVNRILLAQMATMHALNARYDLLVWESDIVRAGLLQKALALLEQSPHVFRPREGKYAGALVMDASPVIPGLEDPFFVLLRSNGTATYYAKDIAFQFWKMGILEGLRFRPYENPYYPGLRTSAPEGEAYTPKAEETINVIDVRQSHPQALVRAALALAGYPALAEKAHHLAYETVLLEGRQMSGRKGLAVSVDEVLEEATRRARAIVEEKNPDHPDKEEAARMVALGAIRFSMVKTEPKKQIDFRYQEALSFEGDTGPYVQYAHARAHSILRKAGEWGAPDLSQATPYERALALDLLDFEEAVLEAAEEKTPHVLAQYLLDLAASWNAYYNARENGQPATPVLTAPEGLRELRLSLVQSLQRTLATGLDLLGIPAPEVM.

The 'HIGH' region motif lies at 112 to 122 (VNPNKELHVGH).

The protein belongs to the class-I aminoacyl-tRNA synthetase family. Monomer.

The protein resides in the cytoplasm. The enzyme catalyses tRNA(Arg) + L-arginine + ATP = L-arginyl-tRNA(Arg) + AMP + diphosphate. The chain is Arginine--tRNA ligase from Thermus thermophilus (strain ATCC BAA-163 / DSM 7039 / HB27).